A 121-amino-acid polypeptide reads, in one-letter code: Ribosome-binding factor A (121 aa).

It belongs to the RbfA family. In terms of assembly, monomer. Binds 30S ribosomal subunits, but not 50S ribosomal subunits or 70S ribosomes.

The protein localises to the cytoplasm. Its function is as follows. One of several proteins that assist in the late maturation steps of the functional core of the 30S ribosomal subunit. Associates with free 30S ribosomal subunits (but not with 30S subunits that are part of 70S ribosomes or polysomes). Required for efficient processing of 16S rRNA. May interact with the 5'-terminal helix region of 16S rRNA. The polypeptide is Ribosome-binding factor A (Lactobacillus helveticus (strain DPC 4571)).